We begin with the raw amino-acid sequence, 39 residues long: Photosystem II reaction center protein J (39 aa).

A helical transmembrane segment spans residues 7 to 27; it reads IPLWLVATVAGMGVITLLGIF.

This sequence belongs to the PsbJ family. In terms of assembly, PSII is composed of 1 copy each of membrane proteins PsbA, PsbB, PsbC, PsbD, PsbE, PsbF, PsbH, PsbI, PsbJ, PsbK, PsbL, PsbM, PsbT, PsbX, PsbY, PsbZ, Psb30/Ycf12, peripheral proteins PsbO, CyanoQ (PsbQ), PsbU, PsbV and a large number of cofactors. It forms dimeric complexes.

It is found in the cellular thylakoid membrane. Its function is as follows. One of the components of the core complex of photosystem II (PSII). PSII is a light-driven water:plastoquinone oxidoreductase that uses light energy to abstract electrons from H(2)O, generating O(2) and a proton gradient subsequently used for ATP formation. It consists of a core antenna complex that captures photons, and an electron transfer chain that converts photonic excitation into a charge separation. The sequence is that of Photosystem II reaction center protein J from Cyanothece sp. (strain PCC 7425 / ATCC 29141).